A 246-amino-acid polypeptide reads, in one-letter code: Ribonuclease 3 (246 aa).

An RNase III domain is found at 18–147 (FQELQKKIGI…FIGALYLDQG (130 aa)). Glutamate 60 provides a ligand contact to Mg(2+). Residue aspartate 64 is part of the active site. Mg(2+) contacts are provided by aspartate 133 and glutamate 136. Glutamate 136 is an active-site residue. Residues 173 to 242 (DFKSQLQELV…AQMALETLRA (70 aa)) enclose the DRBM domain.

Belongs to the ribonuclease III family. In terms of assembly, homodimer. Requires Mg(2+) as cofactor.

It is found in the cytoplasm. The enzyme catalyses Endonucleolytic cleavage to 5'-phosphomonoester.. Digests double-stranded RNA. Involved in the processing of primary rRNA transcript to yield the immediate precursors to the large and small rRNAs (23S and 16S). Processes some mRNAs, and tRNAs when they are encoded in the rRNA operon. Processes pre-crRNA and tracrRNA of type II CRISPR loci if present in the organism. The polypeptide is Ribonuclease 3 (Geobacillus thermodenitrificans (strain NG80-2)).